Here is a 328-residue protein sequence, read N- to C-terminus: Tetraacyldisaccharide 4'-kinase (328 aa).

55 to 62 serves as a coordination point for ATP; that stretch reads TAGGNGKT.

This sequence belongs to the LpxK family.

The enzyme catalyses a lipid A disaccharide + ATP = a lipid IVA + ADP + H(+). The protein operates within glycolipid biosynthesis; lipid IV(A) biosynthesis; lipid IV(A) from (3R)-3-hydroxytetradecanoyl-[acyl-carrier-protein] and UDP-N-acetyl-alpha-D-glucosamine: step 6/6. Transfers the gamma-phosphate of ATP to the 4'-position of a tetraacyldisaccharide 1-phosphate intermediate (termed DS-1-P) to form tetraacyldisaccharide 1,4'-bis-phosphate (lipid IVA). The polypeptide is Tetraacyldisaccharide 4'-kinase (Escherichia coli O139:H28 (strain E24377A / ETEC)).